The sequence spans 255 residues: 28.1 kDa virulence protein (255 aa).

It belongs to the SpvA family.

Not known. This protein is involved in the virulence of salmonellas. The polypeptide is 28.1 kDa virulence protein (mkaB) (Salmonella typhimurium).